The following is an 86-amino-acid chain: Sec-independent protein translocase protein TatA (86 aa).

The helical transmembrane segment at 1 to 21 (MGGISIWQLLIIAVIVVLLFG) threads the bilayer. A disordered region spans residues 42–86 (AIGDDNQPQQAQKTSSDADFETKNITEKQSVAQSETSESKNKEQV). 2 stretches are compositionally biased toward polar residues: residues 47–58 (NQPQQAQKTSSD) and 68–77 (EKQSVAQSET).

The protein belongs to the TatA/E family. In terms of assembly, the Tat system comprises two distinct complexes: a TatABC complex, containing multiple copies of TatA, TatB and TatC subunits, and a separate TatA complex, containing only TatA subunits. Substrates initially bind to the TatABC complex, which probably triggers association of the separate TatA complex to form the active translocon.

The protein localises to the cell inner membrane. Its function is as follows. Part of the twin-arginine translocation (Tat) system that transports large folded proteins containing a characteristic twin-arginine motif in their signal peptide across membranes. TatA could form the protein-conducting channel of the Tat system. The sequence is that of Sec-independent protein translocase protein TatA from Photorhabdus laumondii subsp. laumondii (strain DSM 15139 / CIP 105565 / TT01) (Photorhabdus luminescens subsp. laumondii).